Reading from the N-terminus, the 236-residue chain is Small ribosomal subunit protein uS2c (236 aa).

This sequence belongs to the universal ribosomal protein uS2 family.

It localises to the plastid. The protein resides in the chloroplast. The polypeptide is Small ribosomal subunit protein uS2c (rps2) (Triticum aestivum (Wheat)).